The chain runs to 176 residues: NADH:riboflavin 5'-phosphate oxidoreductase (176 aa).

In terms of biological role, provides the reduced form of flavin mononucleotide for the PIIA synthase reaction. This is NADH:riboflavin 5'-phosphate oxidoreductase (snaC) from Streptomyces pristinaespiralis.